We begin with the raw amino-acid sequence, 150 residues long: 3-hydroxyacyl-[acyl-carrier-protein] dehydratase FabZ (150 aa).

Residue His-51 is part of the active site.

Belongs to the thioester dehydratase family. FabZ subfamily.

It localises to the cytoplasm. It carries out the reaction a (3R)-hydroxyacyl-[ACP] = a (2E)-enoyl-[ACP] + H2O. In terms of biological role, involved in unsaturated fatty acids biosynthesis. Catalyzes the dehydration of short chain beta-hydroxyacyl-ACPs and long chain saturated and unsaturated beta-hydroxyacyl-ACPs. This chain is 3-hydroxyacyl-[acyl-carrier-protein] dehydratase FabZ, found in Legionella pneumophila (strain Paris).